Reading from the N-terminus, the 119-residue chain is NADH dehydrogenase [ubiquinone] 1 subunit C2 (119 aa).

A helical transmembrane segment spans residues 56–75 (GLHRQLLYITAFFFAGYYLV).

This sequence belongs to the complex I NDUFC2 subunit family. As to quaternary structure, complex I is composed of 45 different subunits. Interacts with TMEM242.

The protein localises to the mitochondrion inner membrane. Functionally, accessory subunit of the mitochondrial membrane respiratory chain NADH dehydrogenase (Complex I), that is believed not to be involved in catalysis but required for the complex assembly. Complex I functions in the transfer of electrons from NADH to the respiratory chain. The immediate electron acceptor for the enzyme is believed to be ubiquinone. The chain is NADH dehydrogenase [ubiquinone] 1 subunit C2 from Gorilla gorilla gorilla (Western lowland gorilla).